The primary structure comprises 144 residues: 3-hydroxyacyl-[acyl-carrier-protein] dehydratase FabZ (144 aa).

The active site involves His-48.

The protein belongs to the thioester dehydratase family. FabZ subfamily.

It localises to the cytoplasm. The catalysed reaction is a (3R)-hydroxyacyl-[ACP] = a (2E)-enoyl-[ACP] + H2O. Involved in unsaturated fatty acids biosynthesis. Catalyzes the dehydration of short chain beta-hydroxyacyl-ACPs and long chain saturated and unsaturated beta-hydroxyacyl-ACPs. This Bacillus cytotoxicus (strain DSM 22905 / CIP 110041 / 391-98 / NVH 391-98) protein is 3-hydroxyacyl-[acyl-carrier-protein] dehydratase FabZ.